Consider the following 849-residue polypeptide: MAP7 domain-containing protein 1 (849 aa).

Disordered stretches follow at residues 1-151 (MESG…REER) and 186-210 (EQRLKAEQRRAALEERQRQKLEKNK). The segment covering 24-41 (EPRPSPEGDPSPPPPPTP) has biased composition (pro residues). A phosphothreonine mark is found at threonine 49 and threonine 53. 2 positions are modified to phosphoserine: serine 72 and serine 95. Threonine 99 is modified (phosphothreonine). Residues serine 115 and serine 118 each carry the phosphoserine modification. Phosphothreonine is present on threonine 120. Residues serine 125 and serine 127 each carry the phosphoserine modification. Basic and acidic residues predominate over residues 132 to 151 (QDVKKAGERHKLAKERREER). Residues 167-223 (EKAKALREKQLQERRRRLEEQRLKAEQRRAALEERQRQKLEKNKERYEAAIQRSVKK) adopt a coiled-coil conformation. Phosphoserine is present on residues serine 256, serine 275, serine 315, serine 368, and serine 401. A disordered region spans residues 318 to 815 (TLPRNGRDQG…GFPAKGTAGD (498 aa)). The segment covering 407–437 (RRLEATPVQKKEKKDKERENEKEKSALARER) has biased composition (basic and acidic residues). A phosphoserine mark is found at serine 444, serine 448, serine 454, and serine 460. A compositionally biased stretch (polar residues) spans 457 to 474 (AELSTKSKARPTSPSTTW). A Glycyl lysine isopeptide (Lys-Gly) (interchain with G-Cter in SUMO2) cross-link involves residue lysine 462. Serine 479 and serine 496 each carry phosphoserine. Pro residues predominate over residues 479–497 (SPCPSPGPGHTLPPKPPSP). Positions 523–539 (PEDKNHSKSRTAEEKEP) are enriched in basic and acidic residues. The span at 542–556 (PASPAPSPVPSPTPA) shows a compositional bias: pro residues. Residues serine 544, serine 548, and serine 552 each carry the phosphoserine modification. The residue at position 554 (threonine 554) is a Phosphothreonine. The span at 568-582 (PPDTAVPAVPTVPTF) shows a compositional bias: low complexity. Residues 602 to 724 (TTDREEATRL…QERRKRLEEI (123 aa)) are a coiled coil. The segment covering 603–743 (TDREEATRLL…AETKKQDGKE (141 aa)) has biased composition (basic and acidic residues).

This sequence belongs to the MAP7 family.

The protein resides in the cytoplasm. The protein localises to the cytoskeleton. It is found in the spindle. Its subcellular location is the microtubule organizing center. It localises to the centrosome. The protein resides in the midbody. Functionally, microtubule-stabilizing protein involved in the control of cell motility and neurite outgrowth. Facilitate microtubule stabilization through the maintenance of acetylated stable microtubules. The polypeptide is MAP7 domain-containing protein 1 (Map7d1) (Rattus norvegicus (Rat)).